A 751-amino-acid chain; its full sequence is E3 ubiquitin-protein ligase SMURF2 (751 aa).

The C2 domain occupies 1–119; the sequence is MSNQGSRRNG…TGYQRLDLCK (119 aa). The WW 1 domain occupies 157 to 190; it reads NDLPDGWEERRTASGRIQYLNHITRTTQWERPTR. Residues 214–226 show a composition bias toward polar residues; the sequence is GTNGASCGQTSDP. The tract at residues 214–236 is disordered; the sequence is GTNGASCGQTSDPRISERRVRSQ. 2 WW domains span residues 251-284 and 297-330; these read PDLPEGYEQRTTQQGQVYFLHTQTGVSTWHDPRV and GPLPPGWEIRNTATGRVYFVDHNNRTTQFTDPRL. The HECT domain occupies 417–751; that stretch reads RPKDLWKRLM…IEETCGFAVE (335 aa). The Glycyl thioester intermediate role is filled by Cys-719.

Its subcellular location is the nucleus. It is found in the cytoplasm. It localises to the cell membrane. The protein resides in the membrane raft. The enzyme catalyses S-ubiquitinyl-[E2 ubiquitin-conjugating enzyme]-L-cysteine + [acceptor protein]-L-lysine = [E2 ubiquitin-conjugating enzyme]-L-cysteine + N(6)-ubiquitinyl-[acceptor protein]-L-lysine.. It participates in protein modification; protein ubiquitination. Functionally, E3 ubiquitin-protein ligase which accepts ubiquitin from an E2 ubiquitin-conjugating enzyme in the form of a thioester and then directly transfers the ubiquitin to targeted substrates. In Xenopus laevis (African clawed frog), this protein is E3 ubiquitin-protein ligase SMURF2 (smurf2).